An 89-amino-acid polypeptide reads, in one-letter code: Small ribosomal subunit protein uS14 (89 aa).

It belongs to the universal ribosomal protein uS14 family. As to quaternary structure, part of the 30S ribosomal subunit. Contacts proteins S3 and S10.

Binds 16S rRNA, required for the assembly of 30S particles and may also be responsible for determining the conformation of the 16S rRNA at the A site. The sequence is that of Small ribosomal subunit protein uS14 from Chloroherpeton thalassium (strain ATCC 35110 / GB-78).